A 624-amino-acid polypeptide reads, in one-letter code: APC membrane recruitment protein 2 (624 aa).

2 disordered regions span residues 1-308 and 342-596; these read MDSH…PPSE and EDVG…IPVS. Over residues 74–91 the composition is skewed to basic and acidic residues; sequence SGKKEDAGGGEAQGKDAP. Positions 101-111 are enriched in low complexity; that stretch reads SASSSVAKSHS. Composition is skewed to basic and acidic residues over residues 120-132 and 247-258; these read GRPE…ENAE and RRLEELCGERPD. 2 stretches are compositionally biased toward low complexity: residues 272 to 282 and 295 to 307; these read ITGDIPITTIP and AAAP…DPPS. Gly residues predominate over residues 406–416; it reads TGGGGGGGGGT. Basic and acidic residues predominate over residues 450–464; it reads NNKEEQKGREKEQHE. A compositionally biased stretch (polar residues) spans 535-549; that stretch reads PITTTCSLKTPSSTV.

It belongs to the Amer family.

It localises to the cell membrane. Negative regulator of the canonical Wnt signaling pathway involved in neuroectodermal patterning. Acts by specifically binding phosphatidylinositol 4,5-bisphosphate (PtdIns(4,5)P2), translocating to the cell membrane and interacting with key regulators of the canonical Wnt signaling pathway, such as components of the beta-catenin destruction complex. The sequence is that of APC membrane recruitment protein 2 (AMER2) from Gallus gallus (Chicken).